The primary structure comprises 400 residues: MAP kinase-activated protein kinase 2 (400 aa).

A disordered region spans residues Met1–Phe43. Ser9 bears the Phosphoserine mark. Residues Pro10–Gln42 are compositionally biased toward pro residues. Phosphothreonine is present on Thr25. Residues Lys64 to Ile325 form the Protein kinase domain. Residues Leu70–Val78 and Lys93 each bind ATP. Staurosporine is bound at residue Glu139–Leu141. Asp186 (proton acceptor) is an active-site residue. A Phosphothreonine; by MAPK14 modification is found at Thr222. Ser272 bears the Phosphoserine; by MAPK14 mark. The residue at position 328 (Ser328) is a Phosphoserine; by autocatalysis. An autoinhibitory helix region spans residues Ser328–Arg364. At Thr334 the chain carries Phosphothreonine; by MAPK14. A Glycyl lysine isopeptide (Lys-Gly) (interchain with G-Cter in SUMO) cross-link involves residue Lys353. Positions Met356 to Val365 match the Nuclear export signal (NES) motif. Residues Asp366–Ala390 form a p38 MAPK-binding site region. Short sequence motifs (bipartite nuclear localization signal) lie at residues Lys371–Lys374 and Lys385–Lys389.

It belongs to the protein kinase superfamily. CAMK Ser/Thr protein kinase family. As to quaternary structure, heterodimer with p38-alpha/MAPK14; this heterodimer forms a stable complex: molecules are positioned 'face to face' so that the ATP-binding sites of both kinases are at the heterodimer interface. Interacts with PHC2. Interacts with HSF1. Sumoylation inhibits the protein kinase activity. Post-translationally, phosphorylated and activated by MAP kinase p38-alpha/MAPK14 at Thr-222, Ser-272 and Thr-334. Expressed in all tissues examined.

It is found in the cytoplasm. The protein localises to the nucleus. It carries out the reaction L-seryl-[protein] + ATP = O-phospho-L-seryl-[protein] + ADP + H(+). It catalyses the reaction L-threonyl-[protein] + ATP = O-phospho-L-threonyl-[protein] + ADP + H(+). Activated following phosphorylation by p38-alpha/MAPK14 following various stresses. Inhibited following sumoylation. Specifically inhibited by pyrrolopyridine inhibitors. Its function is as follows. Stress-activated serine/threonine-protein kinase involved in cytokine production, endocytosis, reorganization of the cytoskeleton, cell migration, cell cycle control, chromatin remodeling, DNA damage response and transcriptional regulation. Following stress, it is phosphorylated and activated by MAP kinase p38-alpha/MAPK14, leading to phosphorylation of substrates. Phosphorylates serine in the peptide sequence, Hyd-X-R-X(2)-S, where Hyd is a large hydrophobic residue. Phosphorylates ALOX5, CDC25B, CDC25C, CEP131, ELAVL1, HNRNPA0, HSP27/HSPB1, KRT18, KRT20, LIMK1, LSP1, PABPC1, PARN, PDE4A, RCSD1, RPS6KA3, TAB3 and TTP/ZFP36. Phosphorylates HSF1; leading to the interaction with HSP90 proteins and inhibiting HSF1 homotrimerization, DNA-binding and transactivation activities. Mediates phosphorylation of HSP27/HSPB1 in response to stress, leading to the dissociation of HSP27/HSPB1 from large small heat-shock protein (sHsps) oligomers and impairment of their chaperone activities and ability to protect against oxidative stress effectively. Involved in inflammatory response by regulating tumor necrosis factor (TNF) and IL6 production post-transcriptionally: acts by phosphorylating AU-rich elements (AREs)-binding proteins ELAVL1, HNRNPA0, PABPC1 and TTP/ZFP36, leading to the regulation of the stability and translation of TNF and IL6 mRNAs. Phosphorylation of TTP/ZFP36, a major post-transcriptional regulator of TNF, promotes its binding to 14-3-3 proteins and reduces its ARE mRNA affinity, leading to inhibition of dependent degradation of ARE-containing transcripts. Phosphorylates CEP131 in response to cellular stress induced by ultraviolet irradiation which promotes binding of CEP131 to 14-3-3 proteins and inhibits formation of novel centriolar satellites. Also involved in late G2/M checkpoint following DNA damage through a process of post-transcriptional mRNA stabilization: following DNA damage, relocalizes from nucleus to cytoplasm and phosphorylates HNRNPA0 and PARN, leading to stabilization of GADD45A mRNA. Involved in toll-like receptor signaling pathway (TLR) in dendritic cells: required for acute TLR-induced macropinocytosis by phosphorylating and activating RPS6KA3. This is MAP kinase-activated protein kinase 2 (MAPKAPK2) from Homo sapiens (Human).